A 329-amino-acid chain; its full sequence is Delta-aminolevulinic acid dehydratase (329 aa).

Cysteine 122, cysteine 124, and cysteine 132 together coordinate Zn(2+). The active-site Schiff-base intermediate with substrate is lysine 199. 5-aminolevulinate contacts are provided by arginine 209 and arginine 221. Residue lysine 252 is the Schiff-base intermediate with substrate of the active site. 5-aminolevulinate is bound by residues serine 279 and tyrosine 318.

This sequence belongs to the ALAD family. As to quaternary structure, homooctamer. It depends on Zn(2+) as a cofactor.

It catalyses the reaction 2 5-aminolevulinate = porphobilinogen + 2 H2O + H(+). It functions in the pathway porphyrin-containing compound metabolism; protoporphyrin-IX biosynthesis; coproporphyrinogen-III from 5-aminolevulinate: step 1/4. Its function is as follows. Catalyzes an early step in the biosynthesis of tetrapyrroles. Binds two molecules of 5-aminolevulinate per subunit, each at a distinct site, and catalyzes their condensation to form porphobilinogen. This is Delta-aminolevulinic acid dehydratase (hem2) from Schizosaccharomyces pombe (strain 972 / ATCC 24843) (Fission yeast).